We begin with the raw amino-acid sequence, 104 residues long: uncharacterized protein (104 aa).

A helical transmembrane segment spans residues 80–98 (GSSLPLFDLVFILLSTFFL).

Its subcellular location is the membrane. This is an uncharacterized protein from Saccharomyces cerevisiae (strain ATCC 204508 / S288c) (Baker's yeast).